Here is a 1160-residue protein sequence, read N- to C-terminus: AF4/FMR2 family member 4 (1160 aa).

A compositionally biased stretch (basic and acidic residues) spans 1-19; that stretch reads MNREDRNVLRMKERERRNQ. Disordered stretches follow at residues 1–42, 78–289, 322–908, and 1031–1070; these read MNRE…YKVT, PKPA…SKAH, WPPP…FDDR, and NSYS…SSGG. Polar residues predominate over residues 115–128; it reads PSTSQSQKRSSALQ. S120 bears the Phosphoserine mark. The segment covering 172 to 189 has biased composition (low complexity); that stretch reads RSSSPGKPQAVSSLSSSH. Basic and acidic residues predominate over residues 193 to 212; that stretch reads HGNDHHSKEHQRSKSPRDPD. The residue at position 207 (S207) is a Phosphoserine. Positions 229–247 are enriched in low complexity; that stretch reads SSQSFPPSLMSKSSSMLQK. Composition is skewed to polar residues over residues 268 to 280 and 360 to 370; these read EHYS…NSMT and YSTAKTSNGHQ. A phosphoserine mark is found at S382, S383, S384, and S387. A compositionally biased stretch (polar residues) spans 398–407; sequence PRSTPGSNSE. Over residues 408-424 the composition is skewed to basic and acidic residues; the sequence is PSHHNSEGADNSRDDSS. Positions 425-457 are enriched in low complexity; that stretch reads SHSGSESSSGSDSESESSSSDSEANEPSQSASP. S482, S485, and S486 each carry phosphoserine. Composition is skewed to polar residues over residues 483-496, 505-523, and 544-555; these read PASS…SSQA, GTAS…SSAT, and SPAQSDSTTQRR. The residue at position 544 (S544) is a Phosphoserine. Residues 563 to 581 show a composition bias toward basic and acidic residues; it reads KKPEKSAAEEPRGGLKIES. Residue K578 forms a Glycyl lysine isopeptide (Lys-Gly) (interchain with G-Cter in SUMO2) linkage. A compositionally biased stretch (basic residues) spans 594–607; that stretch reads SRHKAATKGSRKPN. A compositionally biased stretch (basic and acidic residues) spans 608–622; that stretch reads IKKESKSSPRPTAEK. Low complexity predominate over residues 641 to 657; the sequence is TDTSSSDSDGSESLPPS. S666 carries the post-translational modification Phosphoserine. A Phosphothreonine modification is found at T669. 4 positions are modified to phosphoserine: S675, S689, S698, and S701. Position 707 is a phosphotyrosine (Y707). 3 stretches are compositionally biased toward basic and acidic residues: residues 725 to 756, 764 to 784, and 794 to 806; these read PYKE…EKAS, KNDD…DKNS, and ESSK…EKDL. S809 carries the post-translational modification Phosphoserine. Residue K817 is modified to N6-acetyllysine. Phosphoserine is present on S831. Composition is skewed to low complexity over residues 831-859 and 880-895; these read SQSS…SSTA and PNSS…TSES. Phosphoserine occurs at positions 1040, 1052, 1055, and 1059. Positions 1059 to 1070 are enriched in low complexity; sequence SPGNSGSYSSGG.

It belongs to the AF4 family. As to quaternary structure, component of the super elongation complex (SEC), at least composed of EAF1, EAF2, CDK9, MLLT3/AF9, AFF (AFF1 or AFF4), the P-TEFb complex and ELL (ELL, ELL2 or ELL3). Interacts with ELL2; the interaction is direct and leads to stabilize ELL2 and prevent ELL2 ubiquitination and degradation. Interacts with ELL3; the interaction is direct. Dephosphorylated at Ser-544 by the PNUTS-PP1 complex, promoting RNA polymerase II transcription pause-release. Highly expressed in testis by Sertoli cells, and at low levels in other tissues.

The protein resides in the nucleus. The protein localises to the chromosome. Its function is as follows. Key component of the super elongation complex (SEC), a complex required to increase the catalytic rate of RNA polymerase II transcription by suppressing transient pausing by the polymerase at multiple sites along the DNA. In the SEC complex, AFF4 acts as a central scaffold that recruits other factors through direct interactions with ELL proteins (ELL, ELL2 or ELL3) and the P-TEFb complex. This Mus musculus (Mouse) protein is AF4/FMR2 family member 4 (Aff4).